The sequence spans 1580 residues: Endoribonuclease Dicer homolog 3 (1580 aa).

The span at 1–12 (MHSSLEPEKMEE) shows a compositional bias: basic and acidic residues. The segment at 1-22 (MHSSLEPEKMEEGGGSNSLKRK) is disordered. The Helicase ATP-binding domain occupies 51–223 (VYEVAKNRNI…SPSNYAAQVS (173 aa)). 64–71 (LGTGIDKS) contacts ATP. The DECH box motif lies at 170-173 (DECH). In terms of domain architecture, Helicase C-terminal spans 394 to 562 (KLKELFHLLD…SCPPPVKNGH (169 aa)). A compositionally biased stretch (polar residues) spans 581 to 597 (EEAASTQTMSDPPSRNE). Disordered stretches follow at residues 581–601 (EEAASTQTMSDPPSRNEQLPP) and 613–638 (QSNGKEKVASSKSKSSSSAAGSKKRK). A compositionally biased stretch (low complexity) spans 622-633 (SSKSKSSSSAAG). In terms of domain architecture, PAZ spans 836 to 960 (NLIHFANASS…LPPELLARID (125 aa)). RNase III domains follow at residues 985–1157 (ASQL…VSGG) and 1198–1340 (LIEL…IDTR). Residues Glu1234, Asp1326, and Glu1329 each coordinate Mg(2+).

Belongs to the helicase family. Dicer subfamily. Interacts with DRB2 and DRB5. Requires Mg(2+) as cofactor. The cofactor is Mn(2+).

It localises to the nucleus. Its subcellular location is the nucleolus. Functionally, ribonuclease (RNase) III involved in RNA-mediated post-transcriptional gene silencing (PTGS). Involved in the processing of repeat-associated small interfering RNAs (ra-siRNAs, derived from heterochromatin and DNA repeats such as transposons) by cleaving small dsRNAs into 24 nucleotide ra-siRNAs. Plays a role in antiviral RNA silencing. Involved in the production of viral siRNAs derived from the cabbage leaf curl virus (CaLCuV) and tobacco rattle virus (TRV). Targeted by the viral silencing suppressor (VSR) protein 2b of the cucumber mosaic virus (CMV) that inactivates DCL3 function in RNA silencing. Acts redundantly with DICER-LIKE 1 (DCL1) to promote flowering via repression of FLOWERING LOCUS C (FLC). Does not seem to be involved in microRNAs (miRNAs) processing. This is Endoribonuclease Dicer homolog 3 (DCL3) from Arabidopsis thaliana (Mouse-ear cress).